The chain runs to 2314 residues: A-kinase anchor protein 6 (2314 aa).

Over residues 1–12 the composition is skewed to polar residues; sequence MLTMSVTLSPLR. 4 disordered regions span residues 1 to 25, 285 to 432, 505 to 613, and 736 to 755; these read MLTM…DASP, PSSC…DPPD, SLCR…PCHA, and TDEK…HSAT. The segment covering 301–311 has biased composition (basic and acidic residues); the sequence is SDDHKGEHGED. A compositionally biased stretch (polar residues) spans 319–330; it reads QLDSTVGMSSLD. Residues 398 to 420 are compositionally biased toward basic and acidic residues; it reads ETQKNERKGSDRKGQVVDLKPEL. Positions 569 to 592 are enriched in low complexity; that stretch reads SKASSSPPCSHSSESSLGSDSIKS. The span at 736–753 shows a compositional bias: basic and acidic residues; that stretch reads TDEKSERPSSSEKNESHS. Spectrin repeat units lie at residues 768-847 and 1033-1148; these read QHQE…QLLE and ILEK…LLDD. The residue at position 1072 (Ser1072) is a Phosphoserine. Positions 1349–1401 are disordered; sequence CHSGDLSQNSGSESGIVSEGDNEMPTNSDMSLFSMVDGSPSNPETEHPDPQMG. Over residues 1353–1363 the composition is skewed to polar residues; it reads DLSQNSGSESG. Phosphoserine occurs at positions 1568 and 1593. Basic and acidic residues-rich tracts occupy residues 1816–1831 and 1874–1891; these read RSGV…DGGG and GENK…HVAD. Disordered stretches follow at residues 1816–1838, 1854–1926, and 1940–2012; these read RSGV…ANPS, LSEN…KTIS, and SEDS…SGAR. Polar residues predominate over residues 1917-1926; the sequence is NLASNVKTIS. Basic and acidic residues predominate over residues 1944-1958; sequence SVARKEFCPPNDRHP. A PKA-RII subunit binding domain region spans residues 2062 to 2075; it reads IIDMASTALKSKSQ. A disordered region spans residues 2166–2286; sequence EEAGLPGALP…NAKQPKGKVA (121 aa). The span at 2215-2226 shows a compositional bias: basic and acidic residues; that stretch reads GADDAKEGDDVS. The segment covering 2227 to 2243 has biased composition (polar residues); that stretch reads HTSQGCAESTEPTTPSG.

Interacts with RII subunit of PKA, phosphatase 2B (calcineurin) and AKAP79. Interacts with SYNPO2.

Its subcellular location is the sarcoplasmic reticulum. The protein localises to the nucleus membrane. Binds to type II regulatory subunits of protein kinase A and anchors/targets them to the nuclear membrane or sarcoplasmic reticulum. May act as an adapter for assembling multiprotein complexes. The protein is A-kinase anchor protein 6 (Akap6) of Rattus norvegicus (Rat).